Here is a 142-residue protein sequence, read N- to C-terminus: MKDLFDESLTLDTGSAAPGTAPGRPRRRQPAGGKAPDTAAFLANFVRIGEIAAPKPPAAADVVSEPEEEAAVVAELIAEMRPMFQRDGGDIELIGLTGATVQVRLSGSCAGCMMSARTLSTVQHQLIETLGRPVRVVPEIRH.

Residues 1–36 are disordered; sequence MKDLFDESLTLDTGSAAPGTAPGRPRRRQPAGGKAP. The span at 14–23 shows a compositional bias: low complexity; sequence GSAAPGTAPG.

This sequence belongs to the NifU family.

In terms of biological role, may be involved in the formation or repair of [Fe-S] clusters present in iron-sulfur proteins. The protein is Nitrogen fixation protein NifU 2 (nifU2) of Rhodobacter capsulatus (Rhodopseudomonas capsulata).